Consider the following 245-residue polypeptide: tRNA1(Val) (adenine(37)-N6)-methyltransferase (245 aa).

Belongs to the methyltransferase superfamily. tRNA (adenine-N(6)-)-methyltransferase family.

It localises to the cytoplasm. The catalysed reaction is adenosine(37) in tRNA1(Val) + S-adenosyl-L-methionine = N(6)-methyladenosine(37) in tRNA1(Val) + S-adenosyl-L-homocysteine + H(+). Its function is as follows. Specifically methylates the adenine in position 37 of tRNA(1)(Val) (anticodon cmo5UAC). This is tRNA1(Val) (adenine(37)-N6)-methyltransferase from Cronobacter sakazakii (strain ATCC BAA-894) (Enterobacter sakazakii).